The chain runs to 549 residues: OBERON-like protein (549 aa).

The segment at 1–56 (MLPPRQQPRPGGLQTSLSLVSPDACGSPNPQERGSTSDQARDSPSESASSRETWPT) is disordered. Polar residues-rich tracts occupy residues 28 to 38 (PNPQERGSTSD) and 45 to 56 (SESASSRETWPT). The PHD-type zinc-finger motif lies at 224–288 (LCMCVICYKF…LFRCHACSRT (65 aa)). Residues 394 to 520 (VQEAIRKMEA…YLFEKIKLQE (127 aa)) adopt a coiled-coil conformation. The tract at residues 519–549 (QESSRASQSSAGGNDPSQMMYSKIQDLIKNM) is disordered. Residues 521 to 538 (SSRASQSSAGGNDPSQMM) are compositionally biased toward polar residues.

Self-interacts and probably forms heteromers. Binds to VPg of pea seed borne mosaic virus (PSbMV), turnip mosaic virus (TuMV) and lettuce mosaic virus (LMV), but not with VPg of tobacco etch virus (TEV), cowpea mosaic virus (CPMV), tomato black ring virus (TBRV) and grapevine fan leaf virus (GFLV).

The protein resides in the nucleus. Its function is as follows. Required for the maintenance and/or establishment of both the shoot and root meristems, probably by controlling the expression of the meristem genes and of genes required for auxin responses. Involved in the development of the basal pole and in auxin-mediated root and vascular development in the embryo. Confers sensitivity to turnip mosaic virus (TuMV) probably by promoting viral movement and multiplication via interaction with TuMV VPg. This Nicotiana benthamiana protein is OBERON-like protein (PVIP).